The following is a 1233-amino-acid chain: Reverse gyrase 2 (1233 aa).

An RG N-terminal-type zinc finger spans residues 1–41 (MNTIPSSNYLSSCPNCGRVISAERLYKGSVCSECLEEDREF). Zn(2+) contacts are provided by Cys-13, Cys-16, Cys-31, and Cys-34. Residues Gln-89 and 106 to 113 (APPGLGKT) each bind ATP. Positions 93 to 296 (IIRVLRKESF…ALMGFRPGSS (204 aa)) constitute a Helicase ATP-binding domain. The DEAD box motif lies at 212 to 215 (DDVD). Positions 606 to 1233 (QKVKTVLFIV…DIYYEIKSIR (628 aa)) are topoisomerase I. A Toprim domain is found at 610 to 774 (TVLFIVESPN…NIKRAEFHEV (165 aa)). Glu-616 serves as a coordination point for Mg(2+). The RG C-terminal-type; atypical zinc-finger motif lies at 691 to 720 (IKKCINGHQFTDFEQGNQCPKCHTTQIILD). Zn(2+)-binding residues include Cys-694, His-698, Cys-709, and Cys-712. A Mg(2+)-binding site is contributed by Asp-743. The 444-residue stretch at 790 to 1233 (NVNLVKSQIV…DIYYEIKSIR (444 aa)) folds into the Topo IA-type catalytic domain. Catalysis depends on Tyr-947, which acts as the O-(5'-phospho-DNA)-tyrosine intermediate.

In the N-terminal section; belongs to the DEAD box helicase family. DDVD subfamily. This sequence in the C-terminal section; belongs to the type IA topoisomerase family. Monomer. It depends on Zn(2+) as a cofactor. Mg(2+) serves as cofactor.

The protein resides in the cytoplasm. The catalysed reaction is ATP + H2O = ADP + phosphate + H(+). Functionally, modifies the topological state of DNA by introducing positive supercoils in an ATP-dependent process, increasing the linking number in steps of +1. Binds to single-stranded DNA, transiently cleaves and then rejoins the ends, introducing a positive supercoil in the process. The scissile phosphodiester is attacked by the catalytic tyrosine of the enzyme, resulting in the formation of a DNA-(5'-phosphotyrosyl)-enzyme intermediate. Probably involved in rewinding DNA strands in regions of the chromosome that have opened up to allow replication, transcription, DNA repair and/or for DNA protection. The polypeptide is Reverse gyrase 2 (Sulfurisphaera tokodaii (strain DSM 16993 / JCM 10545 / NBRC 100140 / 7) (Sulfolobus tokodaii)).